The sequence spans 106 residues: Large ribosomal subunit protein P1A (106 aa).

The residue at position 2 (serine 2) is an N-acetylserine. The interval 73–106 is disordered; the sequence is GGVAGGEAGEAEAEKEEEEAKEESDDDMGFGLFD. Residues 81–100 show a composition bias toward acidic residues; that stretch reads GEAEAEKEEEEAKEESDDDM. Serine 96 bears the Phosphoserine mark.

It belongs to the eukaryotic ribosomal protein P1/P2 family. In terms of assembly, component of the large ribosomal subunit (LSU). Mature yeast ribosomes consist of a small (40S) and a large (60S) subunit. The 40S small subunit contains 1 molecule of ribosomal RNA (18S rRNA) and 33 different proteins (encoded by 57 genes). The large 60S subunit contains 3 rRNA molecules (25S, 5.8S and 5S rRNA) and 46 different proteins (encoded by 81 genes). The 5 acidic ribosomal P-proteins form the stalk structure of the 60S subunit. They are organized as a pentameric complex in which uL10/P0 interacts with 2 heterodimers, P1A-P2B and P1B-P2A. Post-translationally, N-terminally acetylated by acetyltransferase NatA.

The protein resides in the cytoplasm. In terms of biological role, component of the ribosome, a large ribonucleoprotein complex responsible for the synthesis of proteins in the cell. The small ribosomal subunit (SSU) binds messenger RNAs (mRNAs) and translates the encoded message by selecting cognate aminoacyl-transfer RNA (tRNA) molecules. The large subunit (LSU) contains the ribosomal catalytic site termed the peptidyl transferase center (PTC), which catalyzes the formation of peptide bonds, thereby polymerizing the amino acids delivered by tRNAs into a polypeptide chain. The nascent polypeptides leave the ribosome through a tunnel in the LSU and interact with protein factors that function in enzymatic processing, targeting, and the membrane insertion of nascent chains at the exit of the ribosomal tunnel. The chain is Large ribosomal subunit protein P1A from Saccharomyces cerevisiae (strain ATCC 204508 / S288c) (Baker's yeast).